A 551-amino-acid chain; its full sequence is Glutamate--tRNA ligase (551 aa).

The 'HIGH' region motif lies at 100–110 (PNPNGPPTLGS).

This sequence belongs to the class-I aminoacyl-tRNA synthetase family. Glutamate--tRNA ligase type 2 subfamily.

It is found in the cytoplasm. It catalyses the reaction tRNA(Glu) + L-glutamate + ATP = L-glutamyl-tRNA(Glu) + AMP + diphosphate. Catalyzes the attachment of glutamate to tRNA(Glu) in a two-step reaction: glutamate is first activated by ATP to form Glu-AMP and then transferred to the acceptor end of tRNA(Glu). The chain is Glutamate--tRNA ligase from Archaeoglobus fulgidus (strain ATCC 49558 / DSM 4304 / JCM 9628 / NBRC 100126 / VC-16).